The chain runs to 73 residues: Photosystem I reaction center subunit IV (73 aa).

This sequence belongs to the PsaE family.

It is found in the cellular thylakoid membrane. Functionally, stabilizes the interaction between PsaC and the PSI core, assists the docking of the ferredoxin to PSI and interacts with ferredoxin-NADP oxidoreductase. In Synechococcus sp. (strain JA-3-3Ab) (Cyanobacteria bacterium Yellowstone A-Prime), this protein is Photosystem I reaction center subunit IV.